The sequence spans 498 residues: ATP synthase subunit beta, chloroplastic (498 aa).

172 to 179 is a binding site for ATP; that stretch reads GGAGVGKT.

It belongs to the ATPase alpha/beta chains family. F-type ATPases have 2 components, CF(1) - the catalytic core - and CF(0) - the membrane proton channel. CF(1) has five subunits: alpha(3), beta(3), gamma(1), delta(1), epsilon(1). CF(0) has four main subunits: a(1), b(1), b'(1) and c(9-12).

It localises to the plastid. Its subcellular location is the chloroplast thylakoid membrane. The catalysed reaction is ATP + H2O + 4 H(+)(in) = ADP + phosphate + 5 H(+)(out). Produces ATP from ADP in the presence of a proton gradient across the membrane. The catalytic sites are hosted primarily by the beta subunits. The protein is ATP synthase subunit beta, chloroplastic of Balaka seemannii.